The chain runs to 390 residues: 3-ketoacyl-CoA thiolase (390 aa).

Cysteine 95 serves as the catalytic Acyl-thioester intermediate. Residues histidine 346 and cysteine 376 each act as proton acceptor in the active site.

It belongs to the thiolase-like superfamily. Thiolase family. Heterotetramer of two alpha chains (FadB) and two beta chains (FadA).

It localises to the cytoplasm. The catalysed reaction is an acyl-CoA + acetyl-CoA = a 3-oxoacyl-CoA + CoA. The protein operates within lipid metabolism; fatty acid beta-oxidation. Catalyzes the final step of fatty acid oxidation in which acetyl-CoA is released and the CoA ester of a fatty acid two carbons shorter is formed. This Psychrobacter sp. (strain PRwf-1) protein is 3-ketoacyl-CoA thiolase.